The sequence spans 356 residues: 1-acyl-sn-glycerol-3-phosphate acyltransferase LPAT1, chloroplastic (356 aa).

The transit peptide at 1–56 directs the protein to the chloroplast; the sequence is MDVASARSISSHPSYYGKPICSSQSSLIRISRDKVCCFGRISNGMTSFTTSLHAVP. The helical transmembrane segment at 127–147 threads the bilayer; it reads GIFFCVVAGISATFLIVLMII. The short motif at 202–207 is the HXXXXD motif element; that stretch reads HQSFLD. The helical transmembrane segment at 224 to 244 threads the bilayer; the sequence is TGIFVIPIIGWAMSMMGVVPL.

Belongs to the 1-acyl-sn-glycerol-3-phosphate acyltransferase family. Widely expressed. Expressed at higher level in leaves. Expressed at lower level in silique walls compared to leaves.

It is found in the plastid. Its subcellular location is the chloroplast membrane. It carries out the reaction a fatty acyl-[ACP] + a 1-acyl-sn-glycero-3-phosphate = a 1,2-diacyl-sn-glycero-3-phosphate + holo-[ACP]. The catalysed reaction is a 1-acyl-sn-glycero-3-phosphate + an acyl-CoA = a 1,2-diacyl-sn-glycero-3-phosphate + CoA. Its pathway is phospholipid metabolism; CDP-diacylglycerol biosynthesis; CDP-diacylglycerol from sn-glycerol 3-phosphate: step 2/3. Functionally, plastidial enzyme of the prokaryotic glycerol-3-phosphate pathway that converts lysophosphatidic acid (LPA) into phosphatidic acid by incorporating an acyl moiety at position sn-2. Utilizes palmitoyl-ACP (16:0-ACP) to produce phosphatidic acid containing a saturated group at position sn-2, which is characteristic of lipids synthesized by the prokaryotic pathway. In vitro, can use 16:0-CoA as acyl donor. Essential for embryo development during the transition from the globular to the heart stage when chloroplasts begin to form. The sequence is that of 1-acyl-sn-glycerol-3-phosphate acyltransferase LPAT1, chloroplastic from Arabidopsis thaliana (Mouse-ear cress).